The chain runs to 132 residues: MSKGQVSVEFIVLFLALLVAVVVSTMTPGIFGLNKSVELSSASLAHAALSKVKSNIEILSVSGEGSYKLVYVKSPPANWTFENRTIRVYGNGFNISTNTSVDLNTYNYLASSLKILSVNLTRNDKNVTVAIQ.

Positions 1-4 are excised as a propeptide; sequence MSKG. Positions 9-19 match the QXSXEXXXL motif; that stretch reads EFIVLFLALLV.

In terms of processing, the N-terminus is probably cleaved by the prepilin peptidase EppA, which recognizes the class III signal sequence.

Its subcellular location is the secreted. The protein resides in the cell surface. It is found in the fimbrium. Functionally, minor component of the type IV-like pili. Essential for pili formation. This is Minor structural pilin EpdB from Methanococcus maripaludis (strain DSM 14266 / JCM 13030 / NBRC 101832 / S2 / LL).